A 153-amino-acid polypeptide reads, in one-letter code: Large ribosomal subunit protein uL13 (153 aa).

The segment at 128–153 (SEHPHEAQSPEVLDVTSMNSKNTRSA) is disordered. Polar residues predominate over residues 143–153 (TSMNSKNTRSA).

Belongs to the universal ribosomal protein uL13 family. As to quaternary structure, part of the 50S ribosomal subunit.

Functionally, this protein is one of the early assembly proteins of the 50S ribosomal subunit, although it is not seen to bind rRNA by itself. It is important during the early stages of 50S assembly. The sequence is that of Large ribosomal subunit protein uL13 from Roseobacter denitrificans (strain ATCC 33942 / OCh 114) (Erythrobacter sp. (strain OCh 114)).